The primary structure comprises 196 residues: MHPLSIEGAWSQEPVIHSDHRGRSHEWFRGERFRQTFGHDFPVAQVNVAVSHRGALRGIHYTEIPPGQAKYSVCVRGAGLDVIVDVRIGSPTFGRWEIVPMDAERNTAVYLAAGLGRAFLSLTDDATLVYLCSSGYAPEREHSVNPLDPDLGIVWPADIEPLLSDRDKNAPTLATAERLGLLPTYQAWQEQQQAKA.

Substrate-binding positions include Arg21, Glu26, 45–47 (QVN), and Arg57. His60 functions as the Proton acceptor in the catalytic mechanism. Substrate contacts are provided by Lys70 and Arg117. Tyr130 acts as the Proton donor in catalysis. Substrate is bound by residues Glu141 and Arg166.

Belongs to the dTDP-4-dehydrorhamnose 3,5-epimerase family. Homodimer.

The catalysed reaction is dTDP-4-dehydro-6-deoxy-alpha-D-glucose = dTDP-4-dehydro-6-deoxy-alpha-D-allose. It participates in antibiotic biosynthesis. Functionally, involved in the biosynthesis of dTDP-6-deoxy-D-allose, an intermediate in the biosynthesis of mycinose, which is one of the two unusual sugars attached to the 16-membered macrolactone ring of the aglycone antibiotic dihydrochalcomycin (GERI-155). Catalyzes the conversion of dTDP-4-oxo-6-deoxyglucose to dTDP-4-oxo-6-deoxyallose, via a C-3 epimerization. In Streptomyces sp, this protein is dTDP-4-dehydro-6-deoxyglucose 3-epimerase.